The primary structure comprises 256 residues: Tetraspanin-32 (256 aa).

4 helical membrane-spanning segments follow: residues 15–35 (LITN…VVVI), 61–81 (AFYV…LSTI), 90–110 (LMAA…QVAF), and 203–223 (CTSL…WFAI).

This sequence belongs to the tetraspanin (TM4SF) family. In terms of tissue distribution, expressed exclusively in hematopoietic tissues. Expression detected in spleen, thymus, bone marrow and peripheral blood leukocytes but not in heart, brain, lung, liver, kidney or testis.

The protein localises to the membrane. This Mus musculus (Mouse) protein is Tetraspanin-32 (Tspan32).